Reading from the N-terminus, the 495-residue chain is Glycerol kinase (495 aa).

Residue Thr11 participates in ADP binding. 3 residues coordinate ATP: Thr11, Thr12, and Ser13. Thr11 serves as a coordination point for sn-glycerol 3-phosphate. An ADP-binding site is contributed by Arg15. Residues Arg81, Glu82, Tyr133, and Asp242 each coordinate sn-glycerol 3-phosphate. Glycerol contacts are provided by Arg81, Glu82, Tyr133, Asp242, and Gln243. 2 residues coordinate ADP: Thr264 and Gly307. Residues Thr264, Gly307, Gln311, and Gly409 each contribute to the ATP site. Residues Gly409 and Asn413 each contribute to the ADP site.

It belongs to the FGGY kinase family.

The enzyme catalyses glycerol + ATP = sn-glycerol 3-phosphate + ADP + H(+). The protein operates within polyol metabolism; glycerol degradation via glycerol kinase pathway; sn-glycerol 3-phosphate from glycerol: step 1/1. Its activity is regulated as follows. Inhibited by fructose 1,6-bisphosphate (FBP). In terms of biological role, key enzyme in the regulation of glycerol uptake and metabolism. Catalyzes the phosphorylation of glycerol to yield sn-glycerol 3-phosphate. The sequence is that of Glycerol kinase from Borrelia hermsii (strain HS1 / DAH).